Here is a 234-residue protein sequence, read N- to C-terminus: Leucyl/phenylalanyl-tRNA--protein transferase (234 aa).

It belongs to the L/F-transferase family.

It localises to the cytoplasm. The catalysed reaction is N-terminal L-lysyl-[protein] + L-leucyl-tRNA(Leu) = N-terminal L-leucyl-L-lysyl-[protein] + tRNA(Leu) + H(+). It carries out the reaction N-terminal L-arginyl-[protein] + L-leucyl-tRNA(Leu) = N-terminal L-leucyl-L-arginyl-[protein] + tRNA(Leu) + H(+). It catalyses the reaction L-phenylalanyl-tRNA(Phe) + an N-terminal L-alpha-aminoacyl-[protein] = an N-terminal L-phenylalanyl-L-alpha-aminoacyl-[protein] + tRNA(Phe). Functions in the N-end rule pathway of protein degradation where it conjugates Leu, Phe and, less efficiently, Met from aminoacyl-tRNAs to the N-termini of proteins containing an N-terminal arginine or lysine. The protein is Leucyl/phenylalanyl-tRNA--protein transferase of Nitratidesulfovibrio vulgaris (strain ATCC 29579 / DSM 644 / CCUG 34227 / NCIMB 8303 / VKM B-1760 / Hildenborough) (Desulfovibrio vulgaris).